The following is a 372-amino-acid chain: Peroxisomal biogenesis factor 3 (372 aa).

The Cytoplasmic portion of the chain corresponds to 1 to 15 (MLRSMWNFLKRHKKK). Positions 1–45 (MLRSMWNFLKRHKKKCIFLGTVLGGVYILGKYGQKKLREIQEREA) are targeting to peroxisomes. The chain crosses the membrane as a helical span at residues 16–36 (CIFLGTVLGGVYILGKYGQKK). Topologically, residues 37 to 116 (LREIQEREAA…LKIISFTRSI (80 aa)) are peroxisomal. Residues 117 to 140 (VAVYSTCMLVVLLRVQLNIIGGYI) traverse the membrane as a helical segment. The tract at residues 120–136 (YSTCMLVVLLRVQLNII) is interaction with PEX19. The Cytoplasmic segment spans residues 141-372 (YLDNATVGKN…AFSTPQQLEK (232 aa)).

This sequence belongs to the peroxin-3 family. Interacts with PEX19.

It is found in the peroxisome membrane. Its function is as follows. Involved in peroxisome biosynthesis and integrity. Assembles membrane vesicles before the matrix proteins are translocated. As a docking factor for PEX19, is necessary for the import of peroxisomal membrane proteins in the peroxisomes. The sequence is that of Peroxisomal biogenesis factor 3 (Pex3) from Rattus norvegicus (Rat).